The chain runs to 158 residues: C-type lection lectoxin-Enh3 (158 aa).

The first 23 residues, 1 to 23, serve as a signal peptide directing secretion; that stretch reads MGQFTVVSLGLLAMFLSLSGAKG. 3 cysteine pairs are disulfide-bonded: Cys-26–Cys-37, Cys-54–Cys-154, and Cys-129–Cys-146. The 123-residue stretch at 33–155 folds into the C-type lectin domain; sequence RNGVCNKLFP…CASLHPFICQ (123 aa). The Mannose-binding signature appears at 119–121; that stretch reads EPN. The Ca(2+) site is built by Glu-127, Asn-142, and Asp-143.

The protein belongs to the true venom lectin family. In terms of tissue distribution, expressed by the venom gland.

It localises to the secreted. In terms of biological role, mannose-binding lectin which recognizes specific carbohydrate structures and agglutinates a variety of animal cells by binding to cell-surface glycoproteins and glycolipids. May be a calcium-dependent lectin. This chain is C-type lection lectoxin-Enh3, found in Pseudoferania polylepis (Macleay's water snake).